The chain runs to 393 residues: NAD(P)H-quinone oxidoreductase subunit H, chloroplastic (393 aa).

This sequence belongs to the complex I 49 kDa subunit family. As to quaternary structure, NDH is composed of at least 16 different subunits, 5 of which are encoded in the nucleus.

The protein resides in the plastid. It localises to the chloroplast thylakoid membrane. It carries out the reaction a plastoquinone + NADH + (n+1) H(+)(in) = a plastoquinol + NAD(+) + n H(+)(out). The enzyme catalyses a plastoquinone + NADPH + (n+1) H(+)(in) = a plastoquinol + NADP(+) + n H(+)(out). In terms of biological role, NDH shuttles electrons from NAD(P)H:plastoquinone, via FMN and iron-sulfur (Fe-S) centers, to quinones in the photosynthetic chain and possibly in a chloroplast respiratory chain. The immediate electron acceptor for the enzyme in this species is believed to be plastoquinone. Couples the redox reaction to proton translocation, and thus conserves the redox energy in a proton gradient. This chain is NAD(P)H-quinone oxidoreductase subunit H, chloroplastic, found in Barbarea verna (Land cress).